Reading from the N-terminus, the 304-residue chain is Ribonuclease BN (304 aa).

Residues His-63, His-65, Asp-67, His-68, His-140, Asp-211, and His-269 each coordinate Zn(2+). Residue Asp-67 is the Proton acceptor of the active site.

The protein belongs to the RNase Z family. RNase BN subfamily. As to quaternary structure, homodimer. It depends on Zn(2+) as a cofactor.

Its function is as follows. Zinc phosphodiesterase, which has both exoribonuclease and endoribonuclease activities. This is Ribonuclease BN from Cronobacter sakazakii (strain ATCC BAA-894) (Enterobacter sakazakii).